We begin with the raw amino-acid sequence, 684 residues long: Threonine--tRNA ligase (684 aa).

Residues 1 to 64 (MTAPNPSSLV…ESDTEVEPVA (64 aa)) enclose the TGS domain. The interval 261-567 (DHRKLGVELD…LTEHYAGAFP (307 aa)) is catalytic. Positions 366, 417, and 544 each coordinate Zn(2+).

The protein belongs to the class-II aminoacyl-tRNA synthetase family. As to quaternary structure, homodimer. Zn(2+) is required as a cofactor.

It localises to the cytoplasm. The enzyme catalyses tRNA(Thr) + L-threonine + ATP = L-threonyl-tRNA(Thr) + AMP + diphosphate + H(+). Catalyzes the attachment of threonine to tRNA(Thr) in a two-step reaction: L-threonine is first activated by ATP to form Thr-AMP and then transferred to the acceptor end of tRNA(Thr). Also edits incorrectly charged L-seryl-tRNA(Thr). The chain is Threonine--tRNA ligase from Mycobacteroides abscessus (strain ATCC 19977 / DSM 44196 / CCUG 20993 / CIP 104536 / JCM 13569 / NCTC 13031 / TMC 1543 / L948) (Mycobacterium abscessus).